The chain runs to 197 residues: HTH-type transcriptional regulator BetI (197 aa).

The HTH tetR-type domain maps to 8–68 (PIRRQQLIEA…ATMGYIMSML (61 aa)). Residues 31–50 (SIALIARLAGVSNGIISHYF) constitute a DNA-binding region (H-T-H motif).

It functions in the pathway amine and polyamine biosynthesis; betaine biosynthesis via choline pathway [regulation]. Functionally, repressor involved in the biosynthesis of the osmoprotectant glycine betaine. It represses transcription of the choline transporter BetT and the genes of BetAB involved in the synthesis of glycine betaine. This Pseudomonas fluorescens (strain ATCC BAA-477 / NRRL B-23932 / Pf-5) protein is HTH-type transcriptional regulator BetI.